The sequence spans 147 residues: UPF0735 ACT domain-containing protein YszB (147 aa).

In terms of domain architecture, ACT spans 70 to 145; the sequence is TLFFHLEDRS…FVEKVEILGS (76 aa).

This sequence belongs to the UPF0735 family.

The chain is UPF0735 ACT domain-containing protein YszB (yszB) from Bacillus subtilis (strain 168).